A 218-amino-acid polypeptide reads, in one-letter code: NADH-ubiquinone oxidoreductase 21 kDa subunit, mitochondrial (218 aa).

A mitochondrion-targeting transit peptide spans 1–33; sequence MSALRITTASAARMLRTSNAMMPSVMGAAQRRA. The disordered stretch occupies residues 31–74; that stretch reads RRALSDSAEPARVPSVESARVPEKLAKEDSPLATPKRNSPDYNV. Residues 50-60 are compositionally biased toward basic and acidic residues; the sequence is RVPEKLAKEDS.

The protein belongs to the complex I NDUFS4 subunit family. Complex I is composed of about 40 different subunits. This is a component of the iron-sulfur (IP) fragment of the enzyme.

It localises to the mitochondrion inner membrane. In terms of biological role, accessory subunit of the mitochondrial membrane respiratory chain NADH dehydrogenase (Complex I), that is believed not to be involved in catalysis. Complex I functions in the transfer of electrons from NADH to the respiratory chain. The immediate electron acceptor for the enzyme is believed to be ubiquinone. The polypeptide is NADH-ubiquinone oxidoreductase 21 kDa subunit, mitochondrial (nuo-21) (Neurospora crassa (strain ATCC 24698 / 74-OR23-1A / CBS 708.71 / DSM 1257 / FGSC 987)).